An 80-amino-acid chain; its full sequence is Raniseptin-4 (80 aa).

The first 22 residues, 1 to 22 (MAFLKKSLFLVLFLGIVSLSIC), serve as a signal peptide directing secretion. The propeptide occupies 23–49 (EEEKREGEEEEKQEEENEELSEEELRD).

It belongs to the frog skin active peptide (FSAP) family. Dermaseptin subfamily. Expressed by the skin glands.

The protein resides in the secreted. Functionally, has antibacterial activity. In Boana raniceps (Chaco tree frog), this protein is Raniseptin-4.